A 246-amino-acid chain; its full sequence is Probable transcriptional regulatory protein ORF2U (246 aa).

Belongs to the TACO1 family.

Its subcellular location is the cytoplasm. This is Probable transcriptional regulatory protein ORF2U from Hathewaya histolytica (Clostridium histolyticum).